The following is a 274-amino-acid chain: Diaminopimelate epimerase (274 aa).

The substrate site is built by Asn-11, Gln-44, and Asn-64. Residue Cys-73 is the Proton donor of the active site. Residues Gly-74 to Asn-75, Asn-157, Asn-190, and Glu-208 to Arg-209 contribute to the substrate site. Cys-217 serves as the catalytic Proton acceptor. Gly-218 to Ser-219 serves as a coordination point for substrate.

This sequence belongs to the diaminopimelate epimerase family. In terms of assembly, homodimer.

Its subcellular location is the cytoplasm. It catalyses the reaction (2S,6S)-2,6-diaminopimelate = meso-2,6-diaminopimelate. The protein operates within amino-acid biosynthesis; L-lysine biosynthesis via DAP pathway; DL-2,6-diaminopimelate from LL-2,6-diaminopimelate: step 1/1. Functionally, catalyzes the stereoinversion of LL-2,6-diaminopimelate (L,L-DAP) to meso-diaminopimelate (meso-DAP), a precursor of L-lysine and an essential component of the bacterial peptidoglycan. The polypeptide is Diaminopimelate epimerase (Enterobacter sp. (strain 638)).